A 460-amino-acid polypeptide reads, in one-letter code: ATP synthase subunit beta (460 aa).

150–157 provides a ligand contact to ATP; the sequence is GGAGVGKT.

Belongs to the ATPase alpha/beta chains family. F-type ATPases have 2 components, CF(1) - the catalytic core - and CF(0) - the membrane proton channel. CF(1) has five subunits: alpha(3), beta(3), gamma(1), delta(1), epsilon(1). CF(0) has three main subunits: a(1), b(2) and c(9-12). The alpha and beta chains form an alternating ring which encloses part of the gamma chain. CF(1) is attached to CF(0) by a central stalk formed by the gamma and epsilon chains, while a peripheral stalk is formed by the delta and b chains.

It localises to the cell inner membrane. It catalyses the reaction ATP + H2O + 4 H(+)(in) = ADP + phosphate + 5 H(+)(out). Its function is as follows. Produces ATP from ADP in the presence of a proton gradient across the membrane. The catalytic sites are hosted primarily by the beta subunits. The sequence is that of ATP synthase subunit beta from Pectobacterium atrosepticum (strain SCRI 1043 / ATCC BAA-672) (Erwinia carotovora subsp. atroseptica).